Reading from the N-terminus, the 647-residue chain is Spindle pole body-associated protein VIK1 (647 aa).

Polar residues predominate over residues 36–51 (NTTNTMNGSRPSSMKS). Residues 36–55 (NTTNTMNGSRPSSMKSSLAL) are disordered. The stretch at 202-350 (DHEITEEISQ…SKQEKFYNDT (149 aa)) forms a coiled coil.

As to quaternary structure, interacts with KAR3; the interaction is direct.

The protein localises to the cytoplasm. Its subcellular location is the cytoskeleton. It localises to the microtubule organizing center. It is found in the spindle pole body. The protein resides in the nucleus. Functionally, together with the minus end-directed microtubule motor KAR3, plays a role in microtubule organization. Recruits KAR3 to microtubules, and together they may stabilize the polymers. The KAR3-VIK1 heterodimer cross-links anti-parallel microtubules. Targets and/or maintains KAR3 at the spindle pole body during vegetative growth. The polypeptide is Spindle pole body-associated protein VIK1 (VIK1) (Saccharomyces cerevisiae (strain ATCC 204508 / S288c) (Baker's yeast)).